The following is a 633-amino-acid chain: Kelch repeat and BTB domain-containing protein 11 (633 aa).

The interval 1-118 is disordered; the sequence is MENSVAPFVL…EDPPSRHEHA (118 aa). Residues 35-60 are compositionally biased toward polar residues; that stretch reads STAQTPCSLSASLCFSSGDDSPPQSR. The span at 61 to 73 shows a compositional bias: low complexity; the sequence is ASAAEGSEASPPS. Phosphoserine occurs at positions 70, 73, 92, 95, 107, and 113. The 61-residue stretch at 146–206 folds into the BTB domain; that stretch reads PDLVIEVAGR…AYSGRMAGVR (61 aa). Kelch repeat units follow at residues 317–365, 366–418, 419–463, and 465–506; these read RPQS…VLFN, YLFL…ALDG, HLYA…TCNG, and IYVS…ALDG.

The protein is Kelch repeat and BTB domain-containing protein 11 (Kbtbd11) of Mus musculus (Mouse).